A 297-amino-acid chain; its full sequence is MSNSVPSSVRGKLTPDAPLAPLVWFKSGGTADWLFEPRDVADLQDFLAGLAPEVPVMALGLGSNLIVRDGGVPGVVIRLGKAFAKVAKVDEVTLDCGGGASGILVSSTARDNGIAGLEFLRSIPGTVGGFVRMNGGAYGREVKDVLVDCDVVIRSGEIVTLPLSELGYTYRHSNLTDGSIVVAARFRGHPGNPEAIQAEMDRISAAREASQPLRSKTGGSTFKNPDGGKAWELVDKAGCRGLQIGGAQVSEKHTNFLINTGTATSAEIEGLGEEVRRRVKASSGVDLEWEIKRIGRP.

One can recognise an FAD-binding PCMH-type domain in the interval 26-191 (KSGGTADWLF…VAARFRGHPG (166 aa)). The active site involves Arg-171. The active-site Proton donor is the Ser-220. The active site involves Glu-290.

This sequence belongs to the MurB family. FAD serves as cofactor.

It localises to the cytoplasm. The enzyme catalyses UDP-N-acetyl-alpha-D-muramate + NADP(+) = UDP-N-acetyl-3-O-(1-carboxyvinyl)-alpha-D-glucosamine + NADPH + H(+). It functions in the pathway cell wall biogenesis; peptidoglycan biosynthesis. Cell wall formation. This chain is UDP-N-acetylenolpyruvoylglucosamine reductase, found in Novosphingobium aromaticivorans (strain ATCC 700278 / DSM 12444 / CCUG 56034 / CIP 105152 / NBRC 16084 / F199).